The chain runs to 92 residues: Large ribosomal subunit protein eL31 (92 aa).

The protein belongs to the eukaryotic ribosomal protein eL31 family.

The polypeptide is Large ribosomal subunit protein eL31 (Desulfurococcus amylolyticus (strain DSM 18924 / JCM 16383 / VKM B-2413 / 1221n) (Desulfurococcus kamchatkensis)).